The sequence spans 344 residues: Tetraacyldisaccharide 4'-kinase (344 aa).

65 to 72 (HAGGTGKT) serves as a coordination point for ATP.

This sequence belongs to the LpxK family.

The catalysed reaction is a lipid A disaccharide + ATP = a lipid IVA + ADP + H(+). Its pathway is glycolipid biosynthesis; lipid IV(A) biosynthesis; lipid IV(A) from (3R)-3-hydroxytetradecanoyl-[acyl-carrier-protein] and UDP-N-acetyl-alpha-D-glucosamine: step 6/6. In terms of biological role, transfers the gamma-phosphate of ATP to the 4'-position of a tetraacyldisaccharide 1-phosphate intermediate (termed DS-1-P) to form tetraacyldisaccharide 1,4'-bis-phosphate (lipid IVA). The chain is Tetraacyldisaccharide 4'-kinase from Neisseria meningitidis serogroup C / serotype 2a (strain ATCC 700532 / DSM 15464 / FAM18).